An 88-amino-acid polypeptide reads, in one-letter code: Probable Fe(2+)-trafficking protein (88 aa).

This sequence belongs to the Fe(2+)-trafficking protein family.

Functionally, could be a mediator in iron transactions between iron acquisition and iron-requiring processes, such as synthesis and/or repair of Fe-S clusters in biosynthetic enzymes. The protein is Probable Fe(2+)-trafficking protein of Teredinibacter turnerae (strain ATCC 39867 / T7901).